The sequence spans 408 residues: tRNA pseudouridine synthase D (408 aa).

Residue aspartate 82 is the Nucleophile of the active site. In terms of domain architecture, TRUD spans 157-367; the sequence is GVPNRFGEQR…MEGERRPLRV (211 aa).

This sequence belongs to the pseudouridine synthase TruD family.

The catalysed reaction is uridine(13) in tRNA = pseudouridine(13) in tRNA. Functionally, responsible for synthesis of pseudouridine from uracil-13 in transfer RNAs. The sequence is that of tRNA pseudouridine synthase D from Geobacter sulfurreducens (strain ATCC 51573 / DSM 12127 / PCA).